The sequence spans 151 residues: Large ribosomal subunit protein bL9 (151 aa).

This sequence belongs to the bacterial ribosomal protein bL9 family.

Its function is as follows. Binds to the 23S rRNA. This is Large ribosomal subunit protein bL9 from Mycobacteroides abscessus (strain ATCC 19977 / DSM 44196 / CCUG 20993 / CIP 104536 / JCM 13569 / NCTC 13031 / TMC 1543 / L948) (Mycobacterium abscessus).